The primary structure comprises 478 residues: H(+)/Cl(-) exchange transporter ClcA (478 aa).

Topologically, residues 1–32 are cytoplasmic; sequence MTHSTQQLSPEGVAEGKRGRLIRELVNRDKTP. A helical transmembrane segment spans residues 33-69; the sequence is LIILIMAAVVGVVTGLLGVAFDRGVDWVQQQRLLALA. Topologically, residues 70–76 are periplasmic; it reads NVADSAL. The helical transmembrane segment at 77-100 threads the bilayer; sequence LVWPLAFIMSALLAMMGYFLVSRF. The Selectivity filter part_1 signature appears at 106-110; the sequence is GSGIP. A chloride-binding site is contributed by serine 107. The segment at residues 109-116 is an intramembrane region (helical); the sequence is IPEIEGAM. At 117–123 the chain is on the cytoplasmic side; it reads EEMRPVR. Transmembrane regions (helical) follow at residues 124-141 and 148-166; these read WWRVIPVKFIGGLGTLGA and EGPMVQMGGNSGRMIVDIF. The Selectivity filter part_2 motif lies at 146–150; the sequence is GREGP. The Cytoplasmic portion of the chain corresponds to 167 to 176; the sequence is RLRSPEARHS. 2 consecutive intramembrane regions (helical) follow at residues 177–189 and 193–201; these read LLATGAAAGLSAA and PLAGILFVI. The Cytoplasmic segment spans residues 202–214; the sequence is EEMRSQFRYSLVS. The chain crosses the membrane as a helical span at residues 215–232; the sequence is IKAVFIGVITSTIVYRYF. The Periplasmic segment spans residues 233–252; that stretch reads NGERAIIEVGKLSDAPLNTL. The chain crosses the membrane as a helical span at residues 253–281; that stretch reads WLYLLLGIIFGAVGVIFNALIFRTQDMFV. The Cytoplasmic portion of the chain corresponds to 282–287; that stretch reads RFHGGD. The chain crosses the membrane as a helical span at residues 288–309; the sequence is WRKLVLIGGLLGGMCGLLALLH. At 310–329 the chain is on the periplasmic side; that stretch reads GNAVGGGFALIPIAAAGNFS. 2 helical membrane passes run 330–349 and 355–376; these read IGMLLFIFIARVITTLLCFG and GIFAPMLALGTILGTAFGLSCA. A Selectivity filter part_3 motif is present at residues 355-359; sequence GIFAP. The chloride site is built by isoleucine 356 and phenylalanine 357. The Periplasmic portion of the chain corresponds to 377-386; it reads HFFPQYGIEA. Residues 387 to 401 constitute an intramembrane region (helical); that stretch reads GTFAIAGMGALFAAS. Positions 402-404 form an intramembrane region, note=Loop between two helices; it reads VRA. Residues 405 to 416 constitute an intramembrane region (helical); it reads PLTGIVLVLEMT. An intramembrane region (note=Loop between two helices) is located at residues 417-421; the sequence is DNYQL. The helical transmembrane segment at 422–438 threads the bilayer; it reads ILPMIVTCLGATLIAQF. At 439-478 the chain is on the cytoplasmic side; sequence MGGKPLYSAILARTLAKQEQARATVIAQEPAVENTPQTGR. Tyrosine 445 is a binding site for chloride.

This sequence belongs to the chloride channel (TC 2.A.49) family. ClcA subfamily. Homodimer.

The protein localises to the cell inner membrane. It carries out the reaction 2 chloride(in) + H(+)(out) = 2 chloride(out) + H(+)(in). In terms of biological role, proton-coupled chloride transporter. Functions as antiport system and exchanges two chloride ions for 1 proton. Probably acts as an electrical shunt for an outwardly-directed proton pump that is linked to amino acid decarboxylation, as part of the extreme acid resistance (XAR) response. This Yersinia pseudotuberculosis serotype IB (strain PB1/+) protein is H(+)/Cl(-) exchange transporter ClcA.